A 231-amino-acid polypeptide reads, in one-letter code: Ribonuclease HI (231 aa).

The RNase H type-1 domain maps to 1–146 (MRERAVAACD…ADRAASQAAV (146 aa)). 4 residues coordinate Mg(2+): Asp-10, Glu-50, Asp-72, and Asp-138. Low complexity-rich tracts occupy residues 148–157 (QEAAGSALGS) and 166–181 (VPAA…SGAA). Disordered stretches follow at residues 148–192 (QEAA…SART) and 212–231 (PIAK…VAAG).

It belongs to the RNase H family. Monomer. It depends on Mg(2+) as a cofactor.

It localises to the cytoplasm. The catalysed reaction is Endonucleolytic cleavage to 5'-phosphomonoester.. Its function is as follows. Endonuclease that specifically degrades the RNA of RNA-DNA hybrids. This is Ribonuclease HI (rnhA) from Streptomyces coelicolor (strain ATCC BAA-471 / A3(2) / M145).